The primary structure comprises 101 residues: Urinary protein 3 (101 aa).

Positions 1–21 (MGKHILLLPLGLSLLMSSLLA) are cleaved as a signal peptide. The UPAR/Ly6 domain occupies 22-99 (LQCFRCISFD…CSATPFCNMV (78 aa)). 5 cysteine pairs are disulfide-bonded: Cys-24–Cys-51, Cys-27–Cys-36, Cys-43–Cys-70, Cys-73–Cys-89, and Cys-90–Cys-96.

Its subcellular location is the secreted. This chain is Urinary protein 3, found in Rattus norvegicus (Rat).